We begin with the raw amino-acid sequence, 690 residues long: Protein hook (690 aa).

The region spanning 6 to 122 (MEIYESLIRW…RLLQLILGCA (117 aa)) is the Calponin-homology (CH) domain. Coiled-coil stretches lie at residues 134–515 (QIME…HHAE) and 546–577 (ETTQ…QAAD).

It belongs to the hook family. Homodimer. Interacts with microtubules via its N-terminus.

Its subcellular location is the cytoplasm. It is found in the cytoskeleton. It localises to the endosome. Involved in endocytic trafficking. Probably acts as a cytoskeletal linker protein that tethers endosome vesicles to the cytoskeleton. The chain is Protein hook from Anopheles gambiae (African malaria mosquito).